Here is a 170-residue protein sequence, read N- to C-terminus: Opacity-related protein POPM3 (170 aa).

The protein belongs to the opacity porin family.

It localises to the cell outer membrane. The sequence is that of Opacity-related protein POPM3 (opr) from Neisseria meningitidis serogroup C.